A 237-amino-acid chain; its full sequence is Probable septum site-determining protein MinC (237 aa).

The protein belongs to the MinC family. Interacts with MinD and FtsZ.

Its function is as follows. Cell division inhibitor that blocks the formation of polar Z ring septums. Rapidly oscillates between the poles of the cell to destabilize FtsZ filaments that have formed before they mature into polar Z rings. Prevents FtsZ polymerization. The chain is Probable septum site-determining protein MinC from Neisseria gonorrhoeae.